The chain runs to 254 residues: Pimeloyl-[acyl-carrier protein] methyl ester esterase (254 aa).

The 229-residue stretch at 14-242 (LVLLHGWGMN…ASHAPFISHP (229 aa)) folds into the AB hydrolase-1 domain. Residues Trp20, 82–83 (SL), and 143–147 (FLAIQ) each bind substrate. The Nucleophile role is filled by Ser82. Active-site residues include Asp207 and His235. Position 235 (His235) interacts with substrate.

The protein belongs to the AB hydrolase superfamily. Carboxylesterase BioH family. As to quaternary structure, monomer.

Its subcellular location is the cytoplasm. The catalysed reaction is 6-carboxyhexanoyl-[ACP] methyl ester + H2O = 6-carboxyhexanoyl-[ACP] + methanol + H(+). It participates in cofactor biosynthesis; biotin biosynthesis. In terms of biological role, the physiological role of BioH is to remove the methyl group introduced by BioC when the pimeloyl moiety is complete. It allows to synthesize pimeloyl-ACP via the fatty acid synthetic pathway through the hydrolysis of the ester bonds of pimeloyl-ACP esters. The sequence is that of Pimeloyl-[acyl-carrier protein] methyl ester esterase from Aeromonas hydrophila subsp. hydrophila (strain ATCC 7966 / DSM 30187 / BCRC 13018 / CCUG 14551 / JCM 1027 / KCTC 2358 / NCIMB 9240 / NCTC 8049).